Here is a 434-residue protein sequence, read N- to C-terminus: Septin-6 (434 aa).

A2 is modified (N-acetylalanine). Residue S27 is modified to Phosphoserine. Residues 39–305 (QGFCFNILCV…ELYRRCKLEE (267 aa)) form the Septin-type G domain. The tract at residues 49–56 (GETGLGKS) is G1 motif. Residues 49–56 (GETGLGKS), G104, 185–193 (KADAISKSE), G239, and R254 contribute to the GTP site. The G3 motif stretch occupies residues 101 to 104 (STVG). The tract at residues 184 to 187 (AKAD) is G4 motif. Residues 321–409 (QETYEAKRNE…KTAAELLQSQ (89 aa)) are a coiled coil. K367 is subject to N6-acetyllysine. A disordered region spans residues 405-434 (LLQSQGSQAGGSQTLKRDKEKKNNPWLCTE). Residues 407–417 (QSQGSQAGGSQ) are compositionally biased toward low complexity. Position 416 is a phosphoserine (S416). T418 carries the post-translational modification Phosphothreonine.

The protein belongs to the TRAFAC class TrmE-Era-EngA-EngB-Septin-like GTPase superfamily. Septin GTPase family. In terms of assembly, septins polymerize into heterooligomeric protein complexes that form filaments, and associate with cellular membranes, actin filaments and microtubules. GTPase activity is required for filament formation. Filaments are assembled from asymmetrical heterotrimers, composed of SEPTIN2, SEPTIN6 and SEPTIN7 that associate head-to-head to form a hexameric unit. Within the trimer, directly interacts with SEPTIN2 and SEPTIN7. Also interacts with SEPTIN9 and SEPTIN12. Interaction with SEPTIN12 alters filament structure. Component of a septin core octameric complex consisting of SEPTIN12, SEPTIN7, SEPTIN6 and SEPTIN2 or SEPTIN4 in the order 12-7-6-2-2-6-7-12 or 12-7-6-4-4-6-7-12 and located in the sperm annulus. Interacts with SOCS7. Interacts with HNRNPA1. (Microbial infection) Interacts with HCV NS5B. As to expression, widely expressed.

The protein resides in the cytoplasm. Its subcellular location is the cytoskeleton. The protein localises to the spindle. It localises to the chromosome. It is found in the centromere. The protein resides in the kinetochore. Its subcellular location is the cleavage furrow. The protein localises to the midbody. It localises to the cell projection. It is found in the cilium. The protein resides in the flagellum. Functionally, filament-forming cytoskeletal GTPase. Required for normal organization of the actin cytoskeleton. Involved in cytokinesis. May play a role in HCV RNA replication. Forms a filamentous structure with SEPTIN12, SEPTIN6, SEPTIN2 and probably SEPTIN4 at the sperm annulus which is required for the structural integrity and motility of the sperm tail during postmeiotic differentiation. The polypeptide is Septin-6 (Homo sapiens (Human)).